The primary structure comprises 429 residues: Alanine aminotransferase (429 aa).

Gly-65 and Asn-204 together coordinate L-alanine. Lys-265 is subject to N6-(pyridoxal phosphate)lysine. Arg-403 contacts L-alanine.

Belongs to the class-I pyridoxal-phosphate-dependent aminotransferase family. Homodimer. Pyridoxal 5'-phosphate serves as cofactor.

It is found in the cytoplasm. It carries out the reaction L-alanine + 2-oxoglutarate = pyruvate + L-glutamate. The sequence is that of Alanine aminotransferase (aspC) from Mycobacterium bovis (strain ATCC BAA-935 / AF2122/97).